The sequence spans 374 residues: Dual-specificity RNA methyltransferase RlmN (374 aa).

Glu91 acts as the Proton acceptor in catalysis. The Radical SAM core domain occupies 97–340 (EDDRGTLCVS…TTVRKTRGDD (244 aa)). Cysteines 104 and 345 form a disulfide. Cys111, Cys115, and Cys118 together coordinate [4Fe-4S] cluster. S-adenosyl-L-methionine contacts are provided by residues 166–167 (GE), Ser198, 220–222 (SLH), and Asn302. The S-methylcysteine intermediate role is filled by Cys345.

The protein belongs to the radical SAM superfamily. RlmN family. It depends on [4Fe-4S] cluster as a cofactor.

The protein localises to the cytoplasm. It catalyses the reaction adenosine(2503) in 23S rRNA + 2 reduced [2Fe-2S]-[ferredoxin] + 2 S-adenosyl-L-methionine = 2-methyladenosine(2503) in 23S rRNA + 5'-deoxyadenosine + L-methionine + 2 oxidized [2Fe-2S]-[ferredoxin] + S-adenosyl-L-homocysteine. The catalysed reaction is adenosine(37) in tRNA + 2 reduced [2Fe-2S]-[ferredoxin] + 2 S-adenosyl-L-methionine = 2-methyladenosine(37) in tRNA + 5'-deoxyadenosine + L-methionine + 2 oxidized [2Fe-2S]-[ferredoxin] + S-adenosyl-L-homocysteine. Its function is as follows. Specifically methylates position 2 of adenine 2503 in 23S rRNA and position 2 of adenine 37 in tRNAs. m2A2503 modification seems to play a crucial role in the proofreading step occurring at the peptidyl transferase center and thus would serve to optimize ribosomal fidelity. In Delftia acidovorans (strain DSM 14801 / SPH-1), this protein is Dual-specificity RNA methyltransferase RlmN.